Here is a 96-residue protein sequence, read N- to C-terminus: MAKGQSLQDPFLNALRRERVPVSIYLVNGIKLQGQIESFDQFVILLKNTVSQMVYKHAISTVVPSRPVSHHSNTGTNQAGTNYSGGNATQQDDVAE.

Residues 9-68 (DPFLNALRRERVPVSIYLVNGIKLQGQIESFDQFVILLKNTVSQMVYKHAISTVVPSRPV) enclose the Sm domain. Residues 64-96 (PSRPVSHHSNTGTNQAGTNYSGGNATQQDDVAE) form a disordered region. The span at 70-96 (HHSNTGTNQAGTNYSGGNATQQDDVAE) shows a compositional bias: polar residues.

The protein belongs to the Hfq family. In terms of assembly, homohexamer.

RNA chaperone that binds small regulatory RNA (sRNAs) and mRNAs to facilitate mRNA translational regulation in response to envelope stress, environmental stress and changes in metabolite concentrations. Also binds with high specificity to tRNAs. This is RNA-binding protein Hfq from Proteus mirabilis (strain HI4320).